Reading from the N-terminus, the 109-residue chain is uncharacterized protein (109 aa).

A helical transmembrane segment spans residues 90 to 107; it reads IICNFWGSLLGVGIAFYQ.

It localises to the membrane. This is an uncharacterized protein from Saccharomyces cerevisiae (strain ATCC 204508 / S288c) (Baker's yeast).